Here is a 418-residue protein sequence, read N- to C-terminus: Transmembrane protease serine 11A (418 aa).

Residues 1–18 lie on the Cytoplasmic side of the membrane; sequence MMYRTVGFGTRSRNLKPW. The chain crosses the membrane as a helical; Signal-anchor for type II membrane protein span at residues 19 to 39; that stretch reads MIAVLIVLSLTVVAVTIGLLV. At 40 to 418 the chain is on the extracellular side; that stretch reads HFLVFDQKKE…RNWIASKTGI (379 aa). An SEA domain is found at 47–164; sequence KKEYYHGSFK…SSVQVNAMSS (118 aa). An N-linked (GlcNAc...) asparagine glycan is attached at Asn153. The Peptidase S1 domain occupies 187-417; sequence IASGVIAPKA…YRNWIASKTG (231 aa). Cysteines 212 and 228 form a disulfide. Residues His227 and Asp272 each act as charge relay system in the active site. Asn303 carries an N-linked (GlcNAc...) asparagine glycan. 2 cysteine pairs are disulfide-bonded: Cys337–Cys353 and Cys364–Cys393. The Charge relay system role is filled by Ser368.

Belongs to the peptidase S1 family. In terms of assembly, may interact with ZBTB17. Expressed in esophagus, liver, colon and lung. Down-regulated in esophagus cancers.

It localises to the membrane. Functionally, probable serine protease which may play a role in cellular senescence. Overexpression inhibits cell growth and induce G1 cell cycle arrest. This Homo sapiens (Human) protein is Transmembrane protease serine 11A (TMPRSS11A).